Consider the following 178-residue polypeptide: Probable chorismate pyruvate-lyase (178 aa).

Substrate-binding residues include Arg67, Leu105, and Glu164.

The protein belongs to the UbiC family.

Its subcellular location is the cytoplasm. The enzyme catalyses chorismate = 4-hydroxybenzoate + pyruvate. The protein operates within cofactor biosynthesis; ubiquinone biosynthesis. In terms of biological role, removes the pyruvyl group from chorismate, with concomitant aromatization of the ring, to provide 4-hydroxybenzoate (4HB) for the ubiquinone pathway. The chain is Probable chorismate pyruvate-lyase from Methylobacillus flagellatus (strain ATCC 51484 / DSM 6875 / VKM B-1610 / KT).